The primary structure comprises 471 residues: Trigger factor (471 aa).

The region spanning 171-262 is the PPIase FKBP-type domain; it reads GDLAIVDYAA…LKEIKFRELP (92 aa). The segment at 440-471 is disordered; sequence PEGSLSQTEEDTPDDDAEEEAIVDVEATSDEE. Over residues 447–471 the composition is skewed to acidic residues; the sequence is TEEDTPDDDAEEEAIVDVEATSDEE.

Belongs to the FKBP-type PPIase family. Tig subfamily.

The protein localises to the cytoplasm. It catalyses the reaction [protein]-peptidylproline (omega=180) = [protein]-peptidylproline (omega=0). Its function is as follows. Involved in protein export. Acts as a chaperone by maintaining the newly synthesized protein in an open conformation. Functions as a peptidyl-prolyl cis-trans isomerase. This is Trigger factor (tig) from Synechocystis sp. (strain ATCC 27184 / PCC 6803 / Kazusa).